We begin with the raw amino-acid sequence, 486 residues long: Citrate synthase 3, mitochondrial (486 aa).

The N-terminal 23 residues, 1–23 (MVQRLLPGAHICRRSFNSSAIIK), are a transit peptide targeting the mitochondrion. Residues histidine 315, histidine 361, and aspartate 419 contribute to the active site. Residues 484–486 (NKL) carry the Microbody targeting signal motif.

It belongs to the citrate synthase family.

The protein localises to the mitochondrion. The enzyme catalyses oxaloacetate + acetyl-CoA + H2O = citrate + CoA + H(+). It participates in carbohydrate metabolism; tricarboxylic acid cycle; isocitrate from oxaloacetate: step 1/2. Its function is as follows. Dual specificity mitochondrial citrate and methylcitrate synthase with similar catalytic efficiency with both acetyl-CoA and propionyl-CoA. This is Citrate synthase 3, mitochondrial from Saccharomyces cerevisiae (strain ATCC 204508 / S288c) (Baker's yeast).